A 208-amino-acid chain; its full sequence is Uracil phosphoribosyltransferase (208 aa).

Residues Arg-78, Arg-103, and 130–138 (DPMLATGGT) contribute to the 5-phospho-alpha-D-ribose 1-diphosphate site. Uracil-binding positions include Ile-193 and 198–200 (GDA). 5-phospho-alpha-D-ribose 1-diphosphate is bound at residue Asp-199.

The protein belongs to the UPRTase family. Mg(2+) is required as a cofactor.

It catalyses the reaction UMP + diphosphate = 5-phospho-alpha-D-ribose 1-diphosphate + uracil. Its pathway is pyrimidine metabolism; UMP biosynthesis via salvage pathway; UMP from uracil: step 1/1. Allosterically activated by GTP. Catalyzes the conversion of uracil and 5-phospho-alpha-D-ribose 1-diphosphate (PRPP) to UMP and diphosphate. This is Uracil phosphoribosyltransferase from Nitratidesulfovibrio vulgaris (strain DSM 19637 / Miyazaki F) (Desulfovibrio vulgaris).